Consider the following 154-residue polypeptide: tRNA (cytidine(34)-2'-O)-methyltransferase (154 aa).

Residues Leu-78, Gly-100, Ile-122, and Ser-130 each coordinate S-adenosyl-L-methionine.

The protein belongs to the class IV-like SAM-binding methyltransferase superfamily. RNA methyltransferase TrmH family. TrmL subfamily. Homodimer.

Its subcellular location is the cytoplasm. The enzyme catalyses cytidine(34) in tRNA + S-adenosyl-L-methionine = 2'-O-methylcytidine(34) in tRNA + S-adenosyl-L-homocysteine + H(+). It carries out the reaction 5-carboxymethylaminomethyluridine(34) in tRNA(Leu) + S-adenosyl-L-methionine = 5-carboxymethylaminomethyl-2'-O-methyluridine(34) in tRNA(Leu) + S-adenosyl-L-homocysteine + H(+). In terms of biological role, methylates the ribose at the nucleotide 34 wobble position in the two leucyl isoacceptors tRNA(Leu)(CmAA) and tRNA(Leu)(cmnm5UmAA). Catalyzes the methyl transfer from S-adenosyl-L-methionine to the 2'-OH of the wobble nucleotide. The sequence is that of tRNA (cytidine(34)-2'-O)-methyltransferase from Saccharophagus degradans (strain 2-40 / ATCC 43961 / DSM 17024).